The chain runs to 23 residues: Hemocyanin subunit 1 (23 aa).

Residues 1-23 are disordered; sequence DSPGGASDTQKQHXVNSXXXKXY.

The protein belongs to the tyrosinase family. Hemocyanin subfamily. As to expression, hemolymph.

Its subcellular location is the secreted. It is found in the extracellular space. Hemocyanins are copper-containing oxygen carriers occurring freely dissolved in the hemolymph of many mollusks and arthropods. In Cancer pagurus (Rock crab), this protein is Hemocyanin subunit 1.